Consider the following 311-residue polypeptide: Ribosomal protein L11 methyltransferase (311 aa).

Thr-162, Gly-183, Asp-205, and Asn-248 together coordinate S-adenosyl-L-methionine.

This sequence belongs to the methyltransferase superfamily. PrmA family.

The protein localises to the cytoplasm. The enzyme catalyses L-lysyl-[protein] + 3 S-adenosyl-L-methionine = N(6),N(6),N(6)-trimethyl-L-lysyl-[protein] + 3 S-adenosyl-L-homocysteine + 3 H(+). In terms of biological role, methylates ribosomal protein L11. The sequence is that of Ribosomal protein L11 methyltransferase from Bacillus subtilis (strain 168).